The primary structure comprises 342 residues: S-adenosylmethionine:tRNA ribosyltransferase-isomerase (342 aa).

It belongs to the QueA family. In terms of assembly, monomer.

It localises to the cytoplasm. It carries out the reaction 7-aminomethyl-7-carbaguanosine(34) in tRNA + S-adenosyl-L-methionine = epoxyqueuosine(34) in tRNA + adenine + L-methionine + 2 H(+). Its pathway is tRNA modification; tRNA-queuosine biosynthesis. Transfers and isomerizes the ribose moiety from AdoMet to the 7-aminomethyl group of 7-deazaguanine (preQ1-tRNA) to give epoxyqueuosine (oQ-tRNA). The sequence is that of S-adenosylmethionine:tRNA ribosyltransferase-isomerase from Campylobacter jejuni subsp. jejuni serotype O:23/36 (strain 81-176).